The following is a 119-amino-acid chain: Large ribosomal subunit protein uL18 (119 aa).

It belongs to the universal ribosomal protein uL18 family. In terms of assembly, part of the 50S ribosomal subunit; part of the 5S rRNA/L5/L18/L25 subcomplex. Contacts the 5S and 23S rRNAs.

Functionally, this is one of the proteins that bind and probably mediate the attachment of the 5S RNA into the large ribosomal subunit, where it forms part of the central protuberance. This is Large ribosomal subunit protein uL18 from Clostridium botulinum (strain Loch Maree / Type A3).